A 448-amino-acid chain; its full sequence is DNA repair protein RadA (448 aa).

Residues 10–27 form a C4-type zinc finger; the sequence is CSNCGNTSPKWSGQCFDC. ATP is bound at residue 91-98; it reads GDPGIGKS. A RadA KNRFG motif motif is present at residues 250 to 254; it reads KNRFG. Positions 349 to 448 are lon-protease-like; sequence EVYLSIAGGL…KDLKLLLGSS (100 aa).

This sequence belongs to the RecA family. RadA subfamily.

Functionally, DNA-dependent ATPase involved in processing of recombination intermediates, plays a role in repairing DNA breaks. Stimulates the branch migration of RecA-mediated strand transfer reactions, allowing the 3' invading strand to extend heteroduplex DNA faster. Binds ssDNA in the presence of ADP but not other nucleotides, has ATPase activity that is stimulated by ssDNA and various branched DNA structures, but inhibited by SSB. Does not have RecA's homology-searching function. The chain is DNA repair protein RadA from Rickettsia bellii (strain RML369-C).